An 882-amino-acid polypeptide reads, in one-letter code: DNA mismatch repair protein MutS (882 aa).

Position 635 to 642 (635 to 642) interacts with ATP; that stretch reads GPNMGGKS.

The protein belongs to the DNA mismatch repair MutS family.

Its function is as follows. This protein is involved in the repair of mismatches in DNA. It is possible that it carries out the mismatch recognition step. This protein has a weak ATPase activity. The protein is DNA mismatch repair protein MutS of Janthinobacterium sp. (strain Marseille) (Minibacterium massiliensis).